The sequence spans 193 residues: Peptidyl-tRNA hydrolase (193 aa).

Tyr17 is a tRNA binding site. His22 acts as the Proton acceptor in catalysis. 3 residues coordinate tRNA: Tyr68, Asn70, and Asn116.

It belongs to the PTH family. In terms of assembly, monomer.

Its subcellular location is the cytoplasm. It catalyses the reaction an N-acyl-L-alpha-aminoacyl-tRNA + H2O = an N-acyl-L-amino acid + a tRNA + H(+). In terms of biological role, hydrolyzes ribosome-free peptidyl-tRNAs (with 1 or more amino acids incorporated), which drop off the ribosome during protein synthesis, or as a result of ribosome stalling. Catalyzes the release of premature peptidyl moieties from peptidyl-tRNA molecules trapped in stalled 50S ribosomal subunits, and thus maintains levels of free tRNAs and 50S ribosomes. The sequence is that of Peptidyl-tRNA hydrolase from Chromobacterium violaceum (strain ATCC 12472 / DSM 30191 / JCM 1249 / CCUG 213 / NBRC 12614 / NCIMB 9131 / NCTC 9757 / MK).